We begin with the raw amino-acid sequence, 377 residues long: Peroxisomal membrane protein PEX14 (377 aa).

A compositionally biased stretch (low complexity) spans 1–15 (MASSEQAEQPSQPSS). The disordered stretch occupies residues 1 to 24 (MASSEQAEQPSQPSSTPGSENVLP). Ala2 bears the N-acetylalanine mark. Residues 2-108 (ASSEQAEQPS…YSPAGSRWRD (107 aa)) are Peroxisomal matrix-facing. Lys34 carries the post-translational modification N6-acetyllysine. Residues 109-126 (YGALAIIMAGIAFGFHQL) traverse the membrane as a helical segment. Residues 127 to 377 (YKKYLLPLIL…EGASNESERD (251 aa)) are Cytoplasmic-facing. The segment at 230-377 (PPSPSAPKIP…EGASNESERD (148 aa)) is disordered. Ser232 is modified (phosphoserine). Low complexity-rich tracts occupy residues 244-259 (PVKSPSPSSPAAVNHH) and 265-275 (SPVSNESTSSS). Residues Ser282 and Ser335 each carry the phosphoserine modification. Acidic residues predominate over residues 323 to 342 (KEDEEDEEDDDVSHVDEEDC). Basic and acidic residues predominate over residues 360–377 (QVEKLRRPEGASNESERD).

The protein belongs to the peroxin-14 family. In terms of assembly, interacts with PEX13; forming the PEX13-PEX14 docking complex. Interacts with PEX5 (via WxxxF/Y motifs). Interacts with PEX19. Interacts with tubulin.

It localises to the peroxisome membrane. Component of the PEX13-PEX14 docking complex, a translocon channel that specifically mediates the import of peroxisomal cargo proteins bound to PEX5 receptor. The PEX13-PEX14 docking complex forms a large import pore which can be opened to a diameter of about 9 nm. Mechanistically, PEX5 receptor along with cargo proteins associates with the PEX14 subunit of the PEX13-PEX14 docking complex in the cytosol, leading to the insertion of the receptor into the organelle membrane with the concomitant translocation of the cargo into the peroxisome matrix. Plays a key role for peroxisome movement through a direct interaction with tubulin. In Homo sapiens (Human), this protein is Peroxisomal membrane protein PEX14.